The chain runs to 129 residues: UPF0148 protein AF_2370 (129 aa).

The interval 61 to 80 (SAAKAESEEKPPESTKPAVK) is disordered.

This sequence belongs to the UPF0148 family.

The chain is UPF0148 protein AF_2370 from Archaeoglobus fulgidus (strain ATCC 49558 / DSM 4304 / JCM 9628 / NBRC 100126 / VC-16).